Consider the following 405-residue polypeptide: Riboflavin biosynthesis protein RibBA (405 aa).

Residues 1–205 are DHBP synthase; sequence MEQIKLDSIA…IKDLIEYRLT (205 aa). Residues 30-31, D35, 144-148, and E168 contribute to the D-ribulose 5-phosphate site; these read RE and RVGHT. Mg(2+) is bound at residue E31. Mg(2+) is bound at residue H147. The tract at residues 206–405 is GTP cyclohydrolase II; that stretch reads HESLVKREIG…KMGHTILKKD (200 aa). Residue 256 to 260 coordinates GTP; sequence RVHSS. Positions 261, 272, and 274 each coordinate Zn(2+). GTP is bound by residues Q277, 299-301, and T321; that span reads EGR. The active-site Proton acceptor; for GTP cyclohydrolase activity is the D333. The active-site Nucleophile; for GTP cyclohydrolase activity is the R335. The GTP site is built by T356 and K361.

This sequence in the N-terminal section; belongs to the DHBP synthase family. It in the C-terminal section; belongs to the GTP cyclohydrolase II family. Mg(2+) serves as cofactor. The cofactor is Mn(2+). Zn(2+) is required as a cofactor.

The catalysed reaction is D-ribulose 5-phosphate = (2S)-2-hydroxy-3-oxobutyl phosphate + formate + H(+). It carries out the reaction GTP + 4 H2O = 2,5-diamino-6-hydroxy-4-(5-phosphoribosylamino)-pyrimidine + formate + 2 phosphate + 3 H(+). It functions in the pathway cofactor biosynthesis; riboflavin biosynthesis; 2-hydroxy-3-oxobutyl phosphate from D-ribulose 5-phosphate: step 1/1. It participates in cofactor biosynthesis; riboflavin biosynthesis; 5-amino-6-(D-ribitylamino)uracil from GTP: step 1/4. In terms of biological role, catalyzes the conversion of D-ribulose 5-phosphate to formate and 3,4-dihydroxy-2-butanone 4-phosphate. Functionally, catalyzes the conversion of GTP to 2,5-diamino-6-ribosylamino-4(3H)-pyrimidinone 5'-phosphate (DARP), formate and pyrophosphate. The polypeptide is Riboflavin biosynthesis protein RibBA (Cytophaga hutchinsonii (strain ATCC 33406 / DSM 1761 / CIP 103989 / NBRC 15051 / NCIMB 9469 / D465)).